The primary structure comprises 459 residues: DnaJ homolog subfamily A member 1 homolog (459 aa).

The J domain maps to 6-73 (EYYERLGVKP…EKRKMYDSYG (68 aa)). The segment at 158 to 243 (GKLVKISISR…CKGKRVIQGK (86 aa)) adopts a CR-type zinc-finger fold. Positions 171, 174, 188, 191, 215, 218, 231, and 234 each coordinate Zn(2+). CXXCXGXG motif repeat units lie at residues 171 to 178 (CKTCKGSG), 188 to 195 (CPTCNGSR), 215 to 222 (CHTCHGTG), and 231 to 238 (CKECKGKR). The disordered stretch occupies residues 405 to 459 (NTNEQSSHGGAGGAYQQHGGAYGHQKQQQQGFNPADFGAQFGGGGPQQAQQCQQQ). Residues 418-435 (AYQQHGGAYGHQKQQQQG) are compositionally biased toward low complexity. A Cysteine methyl ester modification is found at Cys-456. Cys-456 is lipidated: S-farnesyl cysteine. Positions 457-459 (QQQ) are cleaved as a propeptide — removed in mature form.

It is found in the membrane. The protein localises to the cytoplasm. The protein resides in the microsome. It localises to the mitochondrion. Its subcellular location is the nucleus. It is found in the perinuclear region. Functionally, co-chaperone for Hsp70 family members. Plays a role in protein transport into mitochondria and in the regulation of apoptosis via its role as co-chaperone. The protein is DnaJ homolog subfamily A member 1 homolog (dnaja1) of Dictyostelium discoideum (Social amoeba).